The following is a 259-amino-acid chain: Hemin import ATP-binding protein HmuV (259 aa).

In terms of domain architecture, ABC transporter spans 2–238; that stretch reads IEARDLNVSI…ALLSEVFDCQ (237 aa). 34-41 is a binding site for ATP; the sequence is GPNGSGKS.

This sequence belongs to the ABC transporter superfamily. Heme (hemin) importer (TC 3.A.1.14.5) family. As to quaternary structure, the complex is composed of two ATP-binding proteins (HmuV), two transmembrane proteins (HmuU) and a solute-binding protein (HmuT).

The protein localises to the cell inner membrane. Functionally, part of the ABC transporter complex HmuTUV involved in hemin import. Responsible for energy coupling to the transport system. The sequence is that of Hemin import ATP-binding protein HmuV from Chelativorans sp. (strain BNC1).